A 99-amino-acid polypeptide reads, in one-letter code: Large ribosomal subunit protein eL21 (99 aa).

A compositionally biased stretch (basic residues) spans 1–18 (MVKHSRGNRTRSRKLLKK). The interval 1–26 (MVKHSRGNRTRSRKLLKKSPRERGAV) is disordered.

It belongs to the eukaryotic ribosomal protein eL21 family.

The sequence is that of Large ribosomal subunit protein eL21 from Metallosphaera sedula (strain ATCC 51363 / DSM 5348 / JCM 9185 / NBRC 15509 / TH2).